A 39-amino-acid chain; its full sequence is Cytochrome b559 subunit beta (39 aa).

The chain crosses the membrane as a helical span at residues 14–30 (WLAVHGLAVPTVSFLGS). Position 18 (His-18) interacts with heme.

This sequence belongs to the PsbE/PsbF family. In terms of assembly, heterodimer of an alpha subunit and a beta subunit. PSII is composed of 1 copy each of membrane proteins PsbA, PsbB, PsbC, PsbD, PsbE, PsbF, PsbH, PsbI, PsbJ, PsbK, PsbL, PsbM, PsbT, PsbX, PsbY, PsbZ, Psb30/Ycf12, at least 3 peripheral proteins of the oxygen-evolving complex and a large number of cofactors. It forms dimeric complexes. Heme b serves as cofactor.

It is found in the plastid. The protein resides in the chloroplast thylakoid membrane. This b-type cytochrome is tightly associated with the reaction center of photosystem II (PSII). PSII is a light-driven water:plastoquinone oxidoreductase that uses light energy to abstract electrons from H(2)O, generating O(2) and a proton gradient subsequently used for ATP formation. It consists of a core antenna complex that captures photons, and an electron transfer chain that converts photonic excitation into a charge separation. In Lotus japonicus (Lotus corniculatus var. japonicus), this protein is Cytochrome b559 subunit beta.